A 338-amino-acid chain; its full sequence is Secretory carrier-associated membrane protein 1 (338 aa).

The segment at 1–64 is disordered; the sequence is MSDFDSNPFA…NVPNTQPAIM (64 aa). An N-acetylserine modification is found at serine 2. Serine 2 carries the post-translational modification Phosphoserine. The Cytoplasmic segment spans residues 2-155; the sequence is SDFDSNPFAD…QKTVKLMYYL (154 aa). Position 45 is a phosphothreonine (threonine 45). A helical transmembrane segment spans residues 156 to 176; it reads WMFHAVTLFLNIFGCLAWFCV. The Lumenal segment spans residues 177-181; it reads DSSRA. The helical transmembrane segment at 182-202 threads the bilayer; sequence VDFGLSILWFLLFTPCSFVCW. The Cytoplasmic portion of the chain corresponds to 203–218; that stretch reads YRPLYGAFRSDSSFRF. The chain crosses the membrane as a helical span at residues 219–239; that stretch reads FVFFFVYICQFAVHVLQAAGF. Topologically, residues 240–261 are lumenal; it reads HNWGNCGWISSLTGLNKNIPVG. The chain crosses the membrane as a helical span at residues 262–282; sequence IMMIIIAALFTASAVISLVMF. At 283 to 338 the chain is on the cytoplasmic side; sequence KKVHGLYRTTGASFEKAQQEFATGVMSNKTVQTAAANAASTAATSAAQNAFKGNQM.

The protein belongs to the SCAMP family. Interacts with SYNRG, ITSN1 and SLC9A7.

Its subcellular location is the golgi apparatus. The protein resides in the trans-Golgi network membrane. It is found in the recycling endosome membrane. Functions in post-Golgi recycling pathways. Acts as a recycling carrier to the cell surface. This is Secretory carrier-associated membrane protein 1 (Scamp1) from Mus musculus (Mouse).